The primary structure comprises 391 residues: 3-ketoacyl-CoA thiolase (391 aa).

Cys95 functions as the Acyl-thioester intermediate in the catalytic mechanism. Residues His347 and Cys377 each act as proton acceptor in the active site.

This sequence belongs to the thiolase-like superfamily. Thiolase family. As to quaternary structure, heterotetramer of two alpha chains (FadB) and two beta chains (FadA).

Its subcellular location is the cytoplasm. It catalyses the reaction an acyl-CoA + acetyl-CoA = a 3-oxoacyl-CoA + CoA. The protein operates within lipid metabolism; fatty acid beta-oxidation. In terms of biological role, catalyzes the final step of fatty acid oxidation in which acetyl-CoA is released and the CoA ester of a fatty acid two carbons shorter is formed. This Pseudomonas fragi protein is 3-ketoacyl-CoA thiolase.